The sequence spans 358 residues: Arginine kinase (358 aa).

The Phosphagen kinase N-terminal domain maps to 6 to 88 (SVEELWAKLD…LDAVIKEYHK (83 aa)). 61–65 (GVGIY) is a substrate binding site. The 238-residue stretch at 116–353 (YIVSTRVRVG…EACLAKEKEL (238 aa)) folds into the Phosphagen kinase C-terminal domain. Residues 119–123 (STRVR) and histidine 182 contribute to the ATP site. Substrate is bound at residue glutamate 222. Arginine 226 serves as a coordination point for ATP. Cysteine 269 is a substrate binding site. Residues 278-282 (RASVH) and 306-311 (RGIHGE) each bind ATP. Glutamate 311 provides a ligand contact to substrate.

The protein belongs to the ATP:guanido phosphotransferase family. As to quaternary structure, monomer.

It carries out the reaction L-arginine + ATP = N(omega)-phospho-L-arginine + ADP + H(+). This chain is Arginine kinase, found in Haliotis madaka (Giant abalone).